The chain runs to 695 residues: Nucleoprotein (695 aa).

2 coiled-coil regions span residues 316 to 341 and 372 to 399; these read VNVG…RRHE and QTLA…VEDQ. 2 disordered regions span residues 424-458 and 483-615; these read QARP…SFVD and TSRE…AREA. The segment covering 438 to 447 has biased composition (basic and acidic residues); that stretch reads VDDKIEHEST. Polar residues-rich tracts occupy residues 494-505 and 537-552; these read PGQSQDLDNSQG and TTDS…SDNE. Residues 603-606 carry the PTAP/PSAP motif motif; it reads PSAP.

This sequence belongs to the filoviruses nucleoprotein family. In terms of assembly, homooligomer. Homomultimerizes to form the nucleocapsid. Binds to viral genomic RNA. Interacts with VP35 and VP30 to form the nucleocapsid. Also interacts with VP24 and VP40. Phosphorylated.

Its subcellular location is the virion. It localises to the host cytoplasm. Functionally, encapsidates the genome, protecting it from nucleases. The encapsidated genomic RNA is termed the nucleocapsid and serves as template for transcription and replication. During replication, encapsidation by NP is coupled to RNA synthesis and all replicative products are resistant to nucleases. In Lake Victoria marburgvirus (strain Ozolin-75) (MARV), this protein is Nucleoprotein (NP).